A 322-amino-acid polypeptide reads, in one-letter code: Malate dehydrogenase (322 aa).

NAD(+) contacts are provided by residues 10–15 and D34; that span reads GSGQIG. The substrate site is built by R83 and R89. Residues N96 and 119–121 contribute to the NAD(+) site; that span reads ITN. 2 residues coordinate substrate: N121 and R152. Catalysis depends on H176, which acts as the Proton acceptor.

The protein belongs to the LDH/MDH superfamily. MDH type 3 family.

The enzyme catalyses (S)-malate + NAD(+) = oxaloacetate + NADH + H(+). Catalyzes the reversible oxidation of malate to oxaloacetate. The protein is Malate dehydrogenase of Nitrobacter winogradskyi (strain ATCC 25391 / DSM 10237 / CIP 104748 / NCIMB 11846 / Nb-255).